The chain runs to 451 residues: uncharacterized protein (451 aa).

The TRAM domain maps to 2-60 (VVKVKQKIPLKIKRMGINGEGIGFYQKTLVFVPGALKGEDIFCQITAVKRNFAEAKLLT). C73, C79, C82, and C162 together coordinate [4Fe-4S] cluster. S-adenosyl-L-methionine is bound by residues Q283, Y312, D333, and D381. The Nucleophile role is filled by C408.

It belongs to the class I-like SAM-binding methyltransferase superfamily. RNA M5U methyltransferase family.

This is an uncharacterized protein from Streptococcus pyogenes serotype M1.